Consider the following 402-residue polypeptide: Phosphoglycerate kinase (402 aa).

Residues 24–26 (DFN), Arg40, 63–66 (HFGR), Arg122, and Arg155 each bind substrate. Residues Lys206, Gly297, Glu328, and 358–361 (GGDS) contribute to the ATP site.

It belongs to the phosphoglycerate kinase family. In terms of assembly, monomer.

The protein localises to the cytoplasm. The enzyme catalyses (2R)-3-phosphoglycerate + ATP = (2R)-3-phospho-glyceroyl phosphate + ADP. It functions in the pathway carbohydrate degradation; glycolysis; pyruvate from D-glyceraldehyde 3-phosphate: step 2/5. This is Phosphoglycerate kinase from Prochlorococcus marinus (strain AS9601).